A 348-amino-acid polypeptide reads, in one-letter code: VIP36-like protein (348 aa).

A signal peptide spans 1 to 38 (MAVALGPSGWWQRWRRRLSAREVSRMLLLLLLLGSGQG). The Lumenal segment spans residues 39–313 (PRQVGAGQTF…APLPPLSGLA (275 aa)). One can recognise an L-type lectin-like domain in the interval 49–274 (EYLKREHSLS…DVISLKLFEL (226 aa)). A carbohydrate is bound by residues serine 93 and aspartate 128. Residues aspartate 159, tyrosine 161, and asparagine 163 each coordinate Ca(2+). Tyrosine 161 and asparagine 163 together coordinate a carbohydrate. Asparagine 181 is a glycosylation site (N-linked (GlcNAc...) asparagine). Residue histidine 188 coordinates a carbohydrate. Residue aspartate 191 coordinates Ca(2+). Residues cysteine 200 and cysteine 237 are joined by a disulfide bond. Residue 258 to 260 (GDL) participates in a carbohydrate binding. A helical membrane pass occupies residues 314 to 334 (LFLIVFFSLVFSVFAIVIGII). Residues 335 to 348 (LYNKWQDQSRKRFY) lie on the Cytoplasmic side of the membrane. The Endoplasmic reticulum retention signal motif lies at 344-346 (RKR).

Its subcellular location is the endoplasmic reticulum membrane. The protein localises to the golgi apparatus membrane. May be involved in the regulation of export from the endoplasmic reticulum of a subset of glycoproteins. May function as a regulator of ERGIC-53. The protein is VIP36-like protein (LMAN2L) of Bos taurus (Bovine).